The chain runs to 230 residues: Triggering receptor expressed on myeloid cells 1 (230 aa).

The first 20 residues, 1–20, serve as a signal peptide directing secretion; the sequence is MRKAGLWGLLCVFFVSEVKA. An Ig-like V-type domain is found at 21-124; the sequence is AIVLEEERYD…IYHPPNDPVV (104 aa). The Extracellular segment spans residues 21–202; the sequence is AIVLEEERYD…TDADSVSTSS (182 aa). A disulfide bridge links Cys-41 with Cys-113. An N-linked (GlcNAc...) asparagine glycan is attached at Asn-191. A helical membrane pass occupies residues 203 to 223; sequence VTISVICGLLSKSLVFIILFI. Residues 224–230 are Cytoplasmic-facing; sequence VTKRTFG.

In terms of assembly, monomer. Homomultimer; when activated. Interacts with TYROBP/DAP12. Interacts with TLR4.

The protein localises to the cell membrane. Functionally, cell surface receptor that plays important roles in innate and adaptive immunity by amplifying inflammatory responses. Upon activation by various ligands such as PGLYRP1, HMGB1 or HSP70, multimerizes and forms a complex with transmembrane adapter TYROBP/DAP12. In turn, initiates a SYK-mediated cascade of tyrosine phosphorylation, activating multiple downstream mediators such as BTK, MAPK1, MAPK3 or phospholipase C-gamma. This cascade promotes the neutrophil- and macrophage-mediated release of pro-inflammatory cytokines and/or chemokines, as well as their migration and thereby amplifies inflammatory responses that are triggered by bacterial and fungal infections. By also promoting the amplification of inflammatory signals that are initially triggered by Toll-like receptor (TLR) and NOD-like receptor engagement, plays a major role in the pathophysiology of acute and chronic inflammatory diseases of different etiologies including septic shock and atherosclerosis. This chain is Triggering receptor expressed on myeloid cells 1 (Trem1), found in Mus musculus (Mouse).